Reading from the N-terminus, the 244-residue chain is Putative ABC transporter ATP-binding protein gll0289 (244 aa).

Residues 5–237 (LVVEELHYSY…RVLLETHGLE (233 aa)) form the ABC transporter domain. 38–45 (GPNGSGKS) serves as a coordination point for ATP.

Belongs to the ABC transporter superfamily.

Its subcellular location is the cell inner membrane. Probably part of an ABC transporter complex. Responsible for energy coupling to the transport system. In Gloeobacter violaceus (strain ATCC 29082 / PCC 7421), this protein is Putative ABC transporter ATP-binding protein gll0289.